The following is a 145-amino-acid chain: Cell wall synthesis protein CwsA (145 aa).

The chain crosses the membrane as a helical span at residues Trp104–Val124.

It belongs to the CwsA family.

It is found in the cell membrane. In terms of biological role, required for regulated cell division, cell wall synthesis and the maintenance of cell shape. The sequence is that of Cell wall synthesis protein CwsA from Mycobacterium bovis (strain ATCC BAA-935 / AF2122/97).